A 198-amino-acid chain; its full sequence is Transcriptional regulator GfcR (198 aa).

This sequence belongs to the purine/pyrimidine phosphoribosyltransferase family. GfcR subfamily.

This Methanospirillum hungatei JF-1 (strain ATCC 27890 / DSM 864 / NBRC 100397 / JF-1) protein is Transcriptional regulator GfcR.